Consider the following 396-residue polypeptide: Elongation factor Tu (396 aa).

Residues 10–205 (KEHVNIGTIG…AVDNYIETPV (196 aa)) form the tr-type G domain. The G1 stretch occupies residues 19–26 (GHVDHGKT). 19–26 (GHVDHGKT) contributes to the GTP binding site. Thr-26 serves as a coordination point for Mg(2+). The tract at residues 60-64 (GITIN) is G2. The tract at residues 81–84 (DCPG) is G3. Residues 81–85 (DCPGH) and 136–139 (NKVD) each bind GTP. Residues 136–139 (NKVD) are G4. The tract at residues 175-177 (SAL) is G5.

The protein belongs to the TRAFAC class translation factor GTPase superfamily. Classic translation factor GTPase family. EF-Tu/EF-1A subfamily. As to quaternary structure, monomer.

Its subcellular location is the cytoplasm. The enzyme catalyses GTP + H2O = GDP + phosphate + H(+). In terms of biological role, GTP hydrolase that promotes the GTP-dependent binding of aminoacyl-tRNA to the A-site of ribosomes during protein biosynthesis. The polypeptide is Elongation factor Tu (Mycoplasmopsis pulmonis (strain UAB CTIP) (Mycoplasma pulmonis)).